A 357-amino-acid polypeptide reads, in one-letter code: Guanine nucleotide-binding protein G(o) subunit alpha (357 aa).

G2 carries the N-myristoyl glycine lipid modification. Residue C3 is the site of S-palmitoyl cysteine attachment. The G-alpha domain maps to 32–357; it reads KDIKLLLLGA…ANNLRGCGLY (326 aa). A G1 motif region spans residues 35–48; sequence KLLLLGAGESGKST. GTP contacts are provided by residues 40 to 47, 179 to 185, 204 to 208, 273 to 276, and A329; these read GAGESGKS, LRTRVKT, DVGGQ, and NKKD. S47 and T185 together coordinate Mg(2+). Residues 177-185 are G2 motif; that stretch reads DILRTRVKT. The interval 200–209 is G3 motif; the sequence is FKLFDVGGQR. The interval 269–276 is G4 motif; that stretch reads ILFLNKKD. Positions 327-332 are G5 motif; that stretch reads TCATDT.

This sequence belongs to the G-alpha family. G(i/o/t/z) subfamily. In terms of assembly, g proteins are composed of 3 units; alpha, beta and gamma. The alpha chain contains the guanine nucleotide binding site.

Functionally, guanine nucleotide-binding proteins (G proteins) are involved as modulators or transducers in various transmembrane signaling systems. The G(o) protein function is not clear. This chain is Guanine nucleotide-binding protein G(o) subunit alpha (SCGOA), found in Mizuhopecten yessoensis (Japanese scallop).